The primary structure comprises 431 residues: Trigger factor (431 aa).

The PPIase FKBP-type domain maps to 163-248 (GDTVVIDYAG…IHEVKGKELP (86 aa)).

This sequence belongs to the FKBP-type PPIase family. Tig subfamily.

The protein localises to the cytoplasm. It carries out the reaction [protein]-peptidylproline (omega=180) = [protein]-peptidylproline (omega=0). Involved in protein export. Acts as a chaperone by maintaining the newly synthesized protein in an open conformation. Functions as a peptidyl-prolyl cis-trans isomerase. The chain is Trigger factor from Latilactobacillus sakei subsp. sakei (strain 23K) (Lactobacillus sakei subsp. sakei).